A 180-amino-acid chain; its full sequence is Ribulose bisphosphate carboxylase small subunit, chloroplastic (180 aa).

The N-terminal 56 residues, 1 to 56 (MASSIMSSAAVATRSNGAQASMVAPFTGLKSNASFPVSRKTNLDITSIASNGGRVR), are a transit peptide targeting the chloroplast.

This sequence belongs to the RuBisCO small chain family. Heterohexadecamer of 8 large and 8 small subunits.

Its subcellular location is the plastid. It localises to the chloroplast. RuBisCO catalyzes two reactions: the carboxylation of D-ribulose 1,5-bisphosphate, the primary event in carbon dioxide fixation, as well as the oxidative fragmentation of the pentose substrate. Both reactions occur simultaneously and in competition at the same active site. Although the small subunit is not catalytic it is essential for maximal activity. This is Ribulose bisphosphate carboxylase small subunit, chloroplastic from Stellaria longipes (Longstalk starwort).